A 161-amino-acid chain; its full sequence is Protein-export protein SecB (161 aa).

This sequence belongs to the SecB family. In terms of assembly, homotetramer, a dimer of dimers. One homotetramer interacts with 1 SecA dimer.

Its subcellular location is the cytoplasm. In terms of biological role, one of the proteins required for the normal export of preproteins out of the cell cytoplasm. It is a molecular chaperone that binds to a subset of precursor proteins, maintaining them in a translocation-competent state. It also specifically binds to its receptor SecA. This Coxiella burnetii (strain CbuG_Q212) (Coxiella burnetii (strain Q212)) protein is Protein-export protein SecB.